The primary structure comprises 238 residues: uncharacterized protein (238 aa).

This is an uncharacterized protein from Haemophilus influenzae (strain ATCC 51907 / DSM 11121 / KW20 / Rd).